We begin with the raw amino-acid sequence, 247 residues long: Uridylate kinase (247 aa).

15–18 (KLSG) contributes to the ATP binding site. The interval 23–28 (GEEGFG) is involved in allosteric activation by GTP. UMP is bound at residue G57. ATP-binding residues include G58 and R62. UMP contacts are provided by residues D77 and 138–145 (TGNPFCTT). ATP contacts are provided by T165, Y171, and D174.

This sequence belongs to the UMP kinase family. Homohexamer.

It is found in the cytoplasm. The enzyme catalyses UMP + ATP = UDP + ADP. It functions in the pathway pyrimidine metabolism; CTP biosynthesis via de novo pathway; UDP from UMP (UMPK route): step 1/1. With respect to regulation, allosterically activated by GTP. Inhibited by UTP. Functionally, catalyzes the reversible phosphorylation of UMP to UDP. The protein is Uridylate kinase of Shewanella loihica (strain ATCC BAA-1088 / PV-4).